The primary structure comprises 142 residues: Large ribosomal subunit protein uL13 (142 aa).

It belongs to the universal ribosomal protein uL13 family. As to quaternary structure, part of the 50S ribosomal subunit.

Its function is as follows. This protein is one of the early assembly proteins of the 50S ribosomal subunit, although it is not seen to bind rRNA by itself. It is important during the early stages of 50S assembly. The chain is Large ribosomal subunit protein uL13 from Thioalkalivibrio sulfidiphilus (strain HL-EbGR7).